We begin with the raw amino-acid sequence, 283 residues long: Cyclin-C (283 aa).

One can recognise a Cyclin N-terminal domain in the interval 46–144 (NVIQALGEHL…ILECEFYLLE (99 aa)). Positions 252–283 (TILSKMPKPKPPPNSEGEQGPNGSQNSSYSQS) are disordered. Residues 272-283 (PNGSQNSSYSQS) show a composition bias toward polar residues.

The protein belongs to the cyclin family. Cyclin C subfamily. As to quaternary structure, component of the Mediator complex. The cylin/CDK pair formed by CCNC/CDK8 also associates with the large subunit of RNA polymerase II.

Its subcellular location is the nucleus. Component of the Mediator complex, a coactivator involved in regulated gene transcription of nearly all RNA polymerase II-dependent genes. Mediator functions as a bridge to convey information from gene-specific regulatory proteins to the basal RNA polymerase II transcription machinery. Mediator is recruited to promoters by direct interactions with regulatory proteins and serves as a scaffold for the assembly of a functional preinitiation complex with RNA polymerase II and the general transcription factors. Binds to and activates cyclin-dependent kinase CDK8 that phosphorylates the CTD (C-terminal domain) of the large subunit of RNA polymerase II (RNAp II), which may inhibit the formation of a transcription initiation complex. This Gallus gallus (Chicken) protein is Cyclin-C (CCNC).